The chain runs to 504 residues: MVLADLGRKITSALRSLSNATIINEEVLNAMLKEVCTALLEADVNIKLVKQLRENVKSAIDLEEMASGLNKRKMIQHAVFKELVKLVDPGVKAWTPTKGKQNVIMFVGLQGSGKTTTCSKLAYYYQRKGWKTCLICADTFRAGAFDQLKQNATKARIPFYGSYTEMDPVIIASEGVEKFKNENFEIIIVDTSGRHKQEDSLFEEMLQVSNAIQPDNIVYVMDASIGQACEAQAKAFKDKVDVASVIVTKLDGHAKGGGALSAVAATKSPIIFIGTGEHIDDFEPFKTQPFISKLLGMGDIEGLIDKVNELKLDDNEALIEKLKHGQFTLRDMYEQFQNIMKMGPFSQILGMIPGFGTDFMSKGNEQESMARLKKLMTIMDSMNDQELDSTDGAKVFSKQPGRIQRVARGSGVSTRDVQELLTQYTKFAQMVKKMGGIKGLFKGGDMSKNVSQSQMAKLNQQMAKMMDPRVLHHMGGMAGLQSMMRQFQQGAAGNMKGMMGFNNM.

Residues 1–295 are NG-domain; it reads MVLADLGRKI…KTQPFISKLL (295 aa). GTP contacts are provided by residues 108–115, 190–194, and 248–251; these read GLQGSGKT, DTSGR, and TKLD. Residues 296-504 are M-domain; that stretch reads GMGDIEGLID…MKGMMGFNNM (209 aa).

This sequence belongs to the GTP-binding SRP family. SRP54 subfamily. In terms of assembly, component of a signal recognition particle (SRP) complex that consists of a 7SL RNA molecule of 300 nucleotides and six protein subunits: SRP72, SRP68, SRP54, SRP19, SRP14 and SRP9. Interacts with RNPS1. Interacts with the SRP receptor subunit SRPRA.

Its subcellular location is the nucleus speckle. It is found in the cytoplasm. The protein resides in the endoplasmic reticulum. The enzyme catalyses GTP + H2O = GDP + phosphate + H(+). In terms of biological role, component of the signal recognition particle (SRP) complex, a ribonucleoprotein complex that mediates the cotranslational targeting of secretory and membrane proteins to the endoplasmic reticulum (ER). As part of the SRP complex, associates with the SRP receptor (SR) component SRPRA to target secretory proteins to the endoplasmic reticulum membrane. Binds to the signal sequence of presecretory proteins when they emerge from the ribosomes. Displays basal GTPase activity, and stimulates reciprocal GTPase activation of the SR subunit SRPRA. Forms a guanosine 5'-triphosphate (GTP)-dependent complex with the SR subunit SRPRA. SR compaction and GTPase mediated rearrangement of SR drive SRP-mediated cotranslational protein translocation into the ER. Requires the presence of SRP9/SRP14 and/or SRP19 to stably interact with RNA. Plays a role in proliferation and differentiation of granulocytic cells, neutrophils migration capacity and exocrine pancreas development. The polypeptide is Signal recognition particle subunit SRP54 (Srp54) (Mus musculus (Mouse)).